A 173-amino-acid polypeptide reads, in one-letter code: Translation initiation factor IF-3 (173 aa).

This sequence belongs to the IF-3 family. In terms of assembly, monomer.

The protein localises to the cytoplasm. Its function is as follows. IF-3 binds to the 30S ribosomal subunit and shifts the equilibrium between 70S ribosomes and their 50S and 30S subunits in favor of the free subunits, thus enhancing the availability of 30S subunits on which protein synthesis initiation begins. This is Translation initiation factor IF-3 from Lactiplantibacillus plantarum (strain ATCC BAA-793 / NCIMB 8826 / WCFS1) (Lactobacillus plantarum).